Consider the following 156-residue polypeptide: MSRKNRAPKREVLPDPLYNSKLVTRLINRIMLDGKRGTAASIVYGAFEQIKEATGNDALEVFEQAMENIMPVLEVRARRVGGSNYQVPVEVRPERRTTLGLRWLVTASRTRGEHTMKDRLAKEILDASNNTGASVKKREDTHRMAEANRAFAHFRW.

Belongs to the universal ribosomal protein uS7 family. In terms of assembly, part of the 30S ribosomal subunit. Contacts proteins S9 and S11.

Functionally, one of the primary rRNA binding proteins, it binds directly to 16S rRNA where it nucleates assembly of the head domain of the 30S subunit. Is located at the subunit interface close to the decoding center, probably blocks exit of the E-site tRNA. This Streptococcus mutans serotype c (strain ATCC 700610 / UA159) protein is Small ribosomal subunit protein uS7.